Here is a 352-residue protein sequence, read N- to C-terminus: MDYQVSSPTYDIDYDTSEPCQKINVKQIAARLLPPLYSLVFIFGFVGNMLVILVLINCKRLKSMTDIYLLNLAISDLFFLLTVPFWAHYAAAQWDFGNTMCQLLTGLYFIGFFSGIFFIILLTIDRYLAIVHAVFALKARTVTFGVVTSVITWVVAVFASLPGIIFTRSQKEGLHYTCSSHFPYSQYQFWKNFQTLKIVILGLVLPLLVMVICYSGILKTLLRCRNEKKRHRAVRLIFTIMIVYFLFWAPYNIVLLLNTFQEFFGLNNCSSSNRLDQAMQVTETLGMTHCCINPIIYAFVGEKFRNYLLVFFQKHIAKHFCKCCSIFQQEAPERASSVYTRSTGEQEISVGL.

The Extracellular portion of the chain corresponds to methionine 1–alanine 30. Residue tyrosine 3 is modified to Sulfotyrosine. Residues serine 6 and serine 7 are each glycosylated (O-linked (GalNAc...) serine). Sulfotyrosine is present on residues tyrosine 10 and tyrosine 14. Disulfide bonds link cysteine 20/cysteine 269 and cysteine 101/cysteine 178. A helical membrane pass occupies residues arginine 31–cysteine 58. Over lysine 59–tyrosine 68 the chain is Cytoplasmic. Residues leucine 69–tyrosine 89 traverse the membrane as a helical segment. Residues alanine 90–glutamine 102 lie on the Extracellular side of the membrane. A helical membrane pass occupies residues leucine 103–isoleucine 124. Residues aspartate 125–threonine 141 lie on the Cytoplasmic side of the membrane. Residues valine 142–phenylalanine 166 form a helical membrane-spanning segment. Residues threonine 167–isoleucine 198 are Extracellular-facing. The chain crosses the membrane as a helical span at residues valine 199 to leucine 218. Over lysine 219 to arginine 235 the chain is Cytoplasmic. A helical membrane pass occupies residues leucine 236 to phenylalanine 260. Topologically, residues glutamine 261–glutamine 277 are extracellular. Residues alanine 278–glycine 301 traverse the membrane as a helical segment. Residues glutamate 302 to leucine 352 lie on the Cytoplasmic side of the membrane. Residues cysteine 321, cysteine 323, and cysteine 324 are each lipidated (S-palmitoyl cysteine). A phosphoserine; by BARK1 mark is found at serine 336, serine 337, serine 342, and serine 349.

This sequence belongs to the G-protein coupled receptor 1 family. In terms of assembly, interacts with PRAF2. Efficient ligand binding to CCL3/MIP-1alpha and CCL4/MIP-1beta requires sulfation, O-glycosylation and sialic acid modifications. Glycosylation on Ser-6 is required for efficient binding of CCL4. Interacts with GRK2. Interacts with ARRB1 and ARRB2. Interacts with CNIH4. Interacts with S100A4; this interaction stimulates T-lymphocyte chemotaxis. Post-translationally, sulfated on at least 2 of the N-terminal tyrosines. Sulfation is required for efficient binding of the chemokines, CCL3 and CCL4. In terms of processing, palmitoylation in the C-terminal is important for cell surface expression. Phosphorylation on serine residues in the C-terminal is stimulated by binding CC chemokines especially by APO-RANTES. Post-translationally, O-glycosylated, but not N-glycosylated. Ser-6 appears to be the major site even if Ser-7 may be also O-glycosylated. Also sialylated glycans present which contribute to chemokine binding. Thr-16 and Ser-17 may also be glycosylated and, if so, with small moieties such as a T-antigen.

The protein localises to the cell membrane. Receptor for a number of inflammatory CC-chemokines including CCL3/MIP-1-alpha, CCL4/MIP-1-beta and RANTES and subsequently transduces a signal by increasing the intracellular calcium ion level. May play a role in the control of granulocytic lineage proliferation or differentiation. Participates in T-lymphocyte migration to the infection site by acting as a chemotactic receptor. The chain is C-C chemokine receptor type 5 (CCR5) from Nomascus leucogenys (Northern white-cheeked gibbon).